Reading from the N-terminus, the 289-residue chain is Four and a half LIM domains protein 3 (289 aa).

Ser-2 carries the N-acetylserine modification. The segment at 7–31 (CAKCNESLYGRKYIQTDSGPYCVPC) adopts a C4-type zinc-finger fold. 2 LIM zinc-binding domains span residues 40 to 92 (CAEC…CNEC) and 101 to 153 (CSAC…CVPC). Lys-157 carries the N6-acetyllysine modification. 2 LIM zinc-binding domains span residues 162 to 212 (CARC…CVAC) and 221 to 275 (CSSC…FVPD). Position 244 is an N6-acetyllysine (Lys-244).

Interacts with SOX15; the interaction recruits FHL3 to FOXK1 promoters where it acts as a transcriptional coactivator of FOXK1. Expressed in myogenic progenitor cells (at protein level). Expressed in skeletal striated muscle and the heart. Expressed to a lesser extent, in lung, and kidney. Expressed in skin and skeletal muscles such as the masseter, tongue, tibialis anterior and plantar muscles.

It localises to the nucleus. It is found in the cytoplasm. Functionally, recruited by SOX15 to FOXK1 promoters where it acts as a transcriptional coactivator of FOXK1. The chain is Four and a half LIM domains protein 3 (Fhl3) from Mus musculus (Mouse).